The primary structure comprises 154 residues: Transcriptional repressor NrdR (154 aa).

A zinc finger spans residues 3-34 (CPTCKYNGTRVVDSRPADDGNSIRRRRECEKC). Positions 49–139 (LIVVKKDGAR…VYRQFKDISV (91 aa)) constitute an ATP-cone domain.

This sequence belongs to the NrdR family. Zn(2+) serves as cofactor.

Functionally, negatively regulates transcription of bacterial ribonucleotide reductase nrd genes and operons by binding to NrdR-boxes. The polypeptide is Transcriptional repressor NrdR (Listeria innocua serovar 6a (strain ATCC BAA-680 / CLIP 11262)).